The following is a 462-amino-acid chain: Cysteine--tRNA ligase (462 aa).

Residue Cys-28 participates in Zn(2+) binding. Residues Val-30–His-40 carry the 'HIGH' region motif. The Zn(2+) site is built by Cys-209, His-234, and Glu-238. Positions Lys-266–Ser-270 match the 'KMSKS' region motif. Residue Lys-269 participates in ATP binding.

Belongs to the class-I aminoacyl-tRNA synthetase family. In terms of assembly, monomer. Zn(2+) serves as cofactor.

It localises to the cytoplasm. The enzyme catalyses tRNA(Cys) + L-cysteine + ATP = L-cysteinyl-tRNA(Cys) + AMP + diphosphate. In Baumannia cicadellinicola subsp. Homalodisca coagulata, this protein is Cysteine--tRNA ligase.